The sequence spans 318 residues: Acetyl-coenzyme A carboxylase carboxyl transferase subunit alpha (318 aa).

Positions N32–R293 constitute a CoA carboxyltransferase C-terminal domain.

Belongs to the AccA family. In terms of assembly, acetyl-CoA carboxylase is a heterohexamer composed of biotin carboxyl carrier protein (AccB), biotin carboxylase (AccC) and two subunits each of ACCase subunit alpha (AccA) and ACCase subunit beta (AccD).

It localises to the cytoplasm. It catalyses the reaction N(6)-carboxybiotinyl-L-lysyl-[protein] + acetyl-CoA = N(6)-biotinyl-L-lysyl-[protein] + malonyl-CoA. It participates in lipid metabolism; malonyl-CoA biosynthesis; malonyl-CoA from acetyl-CoA: step 1/1. Component of the acetyl coenzyme A carboxylase (ACC) complex. First, biotin carboxylase catalyzes the carboxylation of biotin on its carrier protein (BCCP) and then the CO(2) group is transferred by the carboxyltransferase to acetyl-CoA to form malonyl-CoA. This chain is Acetyl-coenzyme A carboxylase carboxyl transferase subunit alpha, found in Halorhodospira halophila (strain DSM 244 / SL1) (Ectothiorhodospira halophila (strain DSM 244 / SL1)).